The primary structure comprises 215 residues: ER lumen protein-retaining receptor A (215 aa).

The Lumenal portion of the chain corresponds to 1–2; sequence MN. A helical transmembrane segment spans residues 3 to 21; the sequence is IFRFAGDMSHLISVLILLL. Residues 22-35 lie on the Cytoplasmic side of the membrane; that stretch reads KIYATKSCAGISLK. Residues 36 to 53 traverse the membrane as a helical segment; that stretch reads TQELYALVFLTRYLDLFT. At 54-61 the chain is on the lumenal side; that stretch reads DYVSLYNS. Residues 62 to 82 form a helical membrane-spanning segment; that stretch reads IMKIVFIASSLAIVWCMRRHP. Over 83 to 98 the chain is Cytoplasmic; it reads LVRRSYDKDLDTFRHQ. Residues 99–112 traverse the membrane as a helical segment; sequence YVVLACFVLGLILN. At 113–119 the chain is on the lumenal side; that stretch reads EKFTVQE. The helical transmembrane segment at 120–139 threads the bilayer; the sequence is VFWAFSIYLEAVAILPQLVL. Topologically, residues 140–151 are cytoplasmic; that stretch reads LQRSGNVDNLTG. A helical membrane pass occupies residues 152-170; it reads QYVVFLGAYRGLYIINWIY. Topologically, residues 171–181 are lumenal; it reads RYFTEDHFTRW. The helical transmembrane segment at 182 to 202 threads the bilayer; that stretch reads IACVSGLVQTALYADFFYYYY. Residues 203-215 lie on the Cytoplasmic side of the membrane; sequence ISWKTNTKLKLPA.

This sequence belongs to the ERD2 family.

It localises to the endoplasmic reticulum membrane. Required for the retention of luminal endoplasmic reticulum proteins. Determines the specificity of the luminal ER protein retention system. Also required for normal vesicular traffic through the Golgi. This receptor recognizes H-D-E-L. The protein is ER lumen protein-retaining receptor A (ERD2A) of Arabidopsis thaliana (Mouse-ear cress).